Reading from the N-terminus, the 94-residue chain is MARVTVQDAVDKIGNRFDLIQIASRRARQLQTGGKDPLVPEENDKYTVIALREIEEGLITKDILDARERQELQEQEAAELAAVSAIAGDHHHHR.

The protein belongs to the RNA polymerase subunit omega family. The RNAP catalytic core consists of 2 alpha, 1 beta, 1 beta' and 1 omega subunit. When a sigma factor is associated with the core the holoenzyme is formed, which can initiate transcription.

The catalysed reaction is RNA(n) + a ribonucleoside 5'-triphosphate = RNA(n+1) + diphosphate. Its function is as follows. Promotes RNA polymerase assembly. Latches the N- and C-terminal regions of the beta' subunit thereby facilitating its interaction with the beta and alpha subunits. This Photobacterium profundum (strain SS9) protein is DNA-directed RNA polymerase subunit omega.